Here is a 793-residue protein sequence, read N- to C-terminus: 28S rRNA (cytosine-C(5))-methyltransferase (793 aa).

The tract at residues Met-1 to Leu-194 is disordered. Residues Met-1–Gly-355 form an N-terminal domain region. 2 stretches are compositionally biased toward basic residues: residues Lys-10–Gln-22 and Leu-44–Ala-57. Residues Ala-25–Ala-57 form an interaction with NPM1 region. A Nucleolar localization signal motif is present at residues Ser-41–Gly-58. Ser-59 and Ser-68 each carry phosphoserine. Lys-72 participates in a covalent cross-link: Glycyl lysine isopeptide (Lys-Gly) (interchain with G-Cter in SUMO2). Arg-86 carries the post-translational modification Citrulline. Composition is skewed to acidic residues over residues Asp-98–Val-110 and Gly-118–Asp-128. Citrulline is present on Arg-148. A compositionally biased stretch (acidic residues) spans Asn-165 to Val-178. Thr-169 is subject to Phosphothreonine. Ser-179 carries the phosphoserine modification. Positions Ser-182–Gly-192 are enriched in basic and acidic residues. Lys-257 participates in a covalent cross-link: Glycyl lysine isopeptide (Lys-Gly) (interchain with G-Cter in SUMO2). The catalytic domain stretch occupies residues Ala-356–Pro-579. Residues Cys-377–Lys-383, Asp-401, Asp-428, and Asp-445 each bind S-adenosyl-L-methionine. The Nucleophile role is filled by Cys-502. Positions Ile-576–Ser-793 are disordered. Residues His-580 to Ser-793 form a C-terminal domain region. The span at Thr-599–Thr-609 shows a compositional bias: polar residues. Lys-601 is covalently cross-linked (Glycyl lysine isopeptide (Lys-Gly) (interchain with G-Cter in SUMO2)). The residue at position 634 (Lys-634) is an N6-acetyllysine. Ser-649 is subject to Phosphoserine. Residues Gln-654 to Val-668 show a composition bias toward polar residues. The segment covering Lys-671 to Lys-686 has biased composition (basic residues). 4 positions are modified to phosphoserine: Ser-713, Ser-767, Ser-782, and Ser-793. Over residues Thr-784–Ser-793 the composition is skewed to polar residues.

Belongs to the class I-like SAM-binding methyltransferase superfamily. RsmB/NOP family. Interacts with MCRS1. Interacts with WDR46. Interacts with RRP1B. Interacts with NPM1, NOP56, FBL, RUVBL1 and NUFIP1. In terms of processing, citrullinated by PADI4.

Its subcellular location is the nucleus. It localises to the nucleolus. It catalyses the reaction a cytidine in 28S rRNA + S-adenosyl-L-methionine = a 5-methylcytidine in 28S rRNA + S-adenosyl-L-homocysteine + H(+). S-adenosyl-L-methionine-dependent methyltransferase that specifically methylates the C(5) position of cytosine 4447 in 28S rRNA. Required for efficient rRNA processing and 60S ribosomal subunit biogenesis. Regulates pre-rRNA processing through non-catalytic complex formation with box C/D snoRNAs and facilitates the recruitment of U3 and U8 snoRNAs to pre-90S ribosomal particles and their stable assembly into snoRNP complexes. May play a role in the regulation of the cell cycle and the increased nucleolar activity that is associated with the cell proliferation. In Mus musculus (Mouse), this protein is 28S rRNA (cytosine-C(5))-methyltransferase (Nop2).